We begin with the raw amino-acid sequence, 187 residues long: Large ribosomal subunit protein uL5 (187 aa).

This sequence belongs to the universal ribosomal protein uL5 family. Part of the 50S ribosomal subunit; part of the 5S rRNA/L5/L18/L25 subcomplex. Contacts the 5S rRNA and the P site tRNA. Forms a bridge to the 30S subunit in the 70S ribosome.

In terms of biological role, this is one of the proteins that bind and probably mediate the attachment of the 5S RNA into the large ribosomal subunit, where it forms part of the central protuberance. In the 70S ribosome it contacts protein S13 of the 30S subunit (bridge B1b), connecting the 2 subunits; this bridge is implicated in subunit movement. Contacts the P site tRNA; the 5S rRNA and some of its associated proteins might help stabilize positioning of ribosome-bound tRNAs. In Mycobacterium bovis (strain BCG / Tokyo 172 / ATCC 35737 / TMC 1019), this protein is Large ribosomal subunit protein uL5.